A 228-amino-acid polypeptide reads, in one-letter code: Thermonuclease (228 aa).

The N-terminal stretch at 1–23 (MTEYLLSAGICMAIVSILLIGMA) is a signal peptide. Residues 24–60 (ISNVSKGQYAKRFFFFATSCLVLTLVVVSSLSSSANA) constitute a propeptide that is removed on maturation. Asp100 is a binding site for Ca(2+). The active site involves Arg114. 2 residues coordinate Ca(2+): Asp119 and Thr120. Active-site residues include Glu122 and Arg166.

This sequence belongs to the thermonuclease family. It depends on Ca(2+) as a cofactor.

The protein localises to the secreted. It carries out the reaction Endonucleolytic cleavage to nucleoside 3'-phosphates and 3'-phosphooligonucleotide end-products.. Enzyme that catalyzes the hydrolysis of both DNA and RNA at the 5' position of the phosphodiester bond. This chain is Thermonuclease (nuc), found in Staphylococcus aureus (strain MSSA476).